The following is a 267-amino-acid chain: 3-methyl-2-oxobutanoate hydroxymethyltransferase (267 aa).

Mg(2+)-binding residues include Asp-45 and Asp-84. Residues 45-46 (DS), Asp-84, and Lys-113 contribute to the 3-methyl-2-oxobutanoate site. Glu-115 lines the Mg(2+) pocket. Glu-182 (proton acceptor) is an active-site residue.

The protein belongs to the PanB family. As to quaternary structure, homodecamer; pentamer of dimers. Mg(2+) serves as cofactor.

It localises to the cytoplasm. The enzyme catalyses 3-methyl-2-oxobutanoate + (6R)-5,10-methylene-5,6,7,8-tetrahydrofolate + H2O = 2-dehydropantoate + (6S)-5,6,7,8-tetrahydrofolate. The protein operates within cofactor biosynthesis; coenzyme A biosynthesis. Catalyzes the reversible reaction in which hydroxymethyl group from 5,10-methylenetetrahydrofolate is transferred onto alpha-ketoisovalerate to form ketopantoate. In Saccharolobus islandicus (strain Y.N.15.51 / Yellowstone #2) (Sulfolobus islandicus), this protein is 3-methyl-2-oxobutanoate hydroxymethyltransferase.